Here is a 386-residue protein sequence, read N- to C-terminus: NADH kinase pos5, mitochondrial (386 aa).

A mitochondrion-targeting transit peptide spans Met1–Tyr42.

It belongs to the NAD kinase family.

The protein resides in the mitochondrion. It catalyses the reaction NADH + ATP = ADP + NADPH + H(+). In terms of biological role, phosphorylates both NADH and NAD(+), with a preference for NADH. Anti-oxidant factor and key source of the cellular reductant NADPH. This is NADH kinase pos5, mitochondrial (pos5) from Schizosaccharomyces pombe (strain 972 / ATCC 24843) (Fission yeast).